A 411-amino-acid chain; its full sequence is Carbohydrate sulfotransferase 1 (411 aa).

Residues 1 to 2 (MQ) are Cytoplasmic-facing. The helical; Signal-anchor for type II membrane protein transmembrane segment at 3-23 (CSWKAVLLLALASIAIQYTAI) threads the bilayer. The Lumenal portion of the chain corresponds to 24-411 (RTFTAKSFHT…VEERDFRPFS (388 aa)). Asparagine 56 carries an N-linked (GlcNAc...) asparagine glycan. 69 to 75 (TRSGSSF) provides a ligand contact to 3'-phosphoadenylyl sulfate. N-linked (GlcNAc...) asparagine glycosylation is found at asparagine 145 and asparagine 189. 234-242 (RDPRGILAS) serves as a coordination point for 3'-phosphoadenylyl sulfate. N-linked (GlcNAc...) asparagine glycosylation is present at asparagine 334. The Cell attachment site signature appears at 337–339 (RGD).

It belongs to the sulfotransferase 1 family. Gal/GlcNAc/GalNAc subfamily. Widely expressed at low level. Expressed in brain and skeletal muscle. Expressed by high endothelial cells (HEVs) and leukocytes.

The protein localises to the golgi apparatus membrane. The enzyme catalyses 3'-phosphoadenylyl sulfate + keratan = adenosine 3',5'-bisphosphate + keratan 6'-sulfate.. It participates in glycan metabolism. Functionally, sulfotransferase that utilizes 3'-phospho-5'-adenylyl sulfate (PAPS) as sulfonate donor to catalyze the transfer of sulfate to position 6 of internal galactose (Gal) residues of keratan. Cooperates with B4GALT4 and B3GNT7 glycosyltransferases and CHST6 sulfotransferase to construct and elongate disulfated disaccharide unit [-&gt;3(6-sulfoGalbeta)1-&gt;4(6-sulfoGlcNAcbeta)1-&gt;] within keratan sulfate polymer. Has a preference for sulfating keratan sulfate, but it also transfers sulfate to the unsulfated polymer. Involved in biosynthesis of phosphacan, a major keratan sulfate proteoglycan in the developing brain. Involved in biosynthesis of 6-sulfoGalbeta-containing O-linked glycans in high endothelial venules of lymph nodes. May act in a synergistic manner with CHST4 to generate sialyl 6',6-disulfo Lewis X motif, a recognition determinant for immune cell receptors implicated in leukocyte trafficking. Catalyzes sulfation of N-acetyllactosamine (LacNAc) oligosaccharides with highest efficiency for sialylated LacNAc structures. This Homo sapiens (Human) protein is Carbohydrate sulfotransferase 1.